The sequence spans 277 residues: Large ribosomal subunit protein uL2 (277 aa).

Positions valine 223 to arginine 277 are disordered. The segment covering threonine 253–arginine 277 has biased composition (basic residues).

The protein belongs to the universal ribosomal protein uL2 family. Part of the 50S ribosomal subunit. Forms a bridge to the 30S subunit in the 70S ribosome.

In terms of biological role, one of the primary rRNA binding proteins. Required for association of the 30S and 50S subunits to form the 70S ribosome, for tRNA binding and peptide bond formation. It has been suggested to have peptidyltransferase activity; this is somewhat controversial. Makes several contacts with the 16S rRNA in the 70S ribosome. This is Large ribosomal subunit protein uL2 from Halothermothrix orenii (strain H 168 / OCM 544 / DSM 9562).